A 240-amino-acid polypeptide reads, in one-letter code: 4-hydroxy-tetrahydrodipicolinate reductase (240 aa).

7–12 (GLSGTM) provides a ligand contact to NAD(+). Lysine 35 serves as a coordination point for NADP(+). Residues 74 to 76 (GTT) and 98 to 101 (ATNM) each bind NAD(+). Residue histidine 131 is the Proton donor/acceptor of the active site. Histidine 132 contacts (S)-2,3,4,5-tetrahydrodipicolinate. Lysine 135 serves as the catalytic Proton donor. 141-142 (GS) contributes to the (S)-2,3,4,5-tetrahydrodipicolinate binding site.

The protein belongs to the DapB family.

It is found in the cytoplasm. The catalysed reaction is (S)-2,3,4,5-tetrahydrodipicolinate + NAD(+) + H2O = (2S,4S)-4-hydroxy-2,3,4,5-tetrahydrodipicolinate + NADH + H(+). The enzyme catalyses (S)-2,3,4,5-tetrahydrodipicolinate + NADP(+) + H2O = (2S,4S)-4-hydroxy-2,3,4,5-tetrahydrodipicolinate + NADPH + H(+). It functions in the pathway amino-acid biosynthesis; L-lysine biosynthesis via DAP pathway; (S)-tetrahydrodipicolinate from L-aspartate: step 4/4. Catalyzes the conversion of 4-hydroxy-tetrahydrodipicolinate (HTPA) to tetrahydrodipicolinate. The polypeptide is 4-hydroxy-tetrahydrodipicolinate reductase (Alkaliphilus metalliredigens (strain QYMF)).